The primary structure comprises 143 residues: Mini-ribonuclease 3 (143 aa).

Residue Asp23 is part of the active site.

The protein belongs to the MrnC RNase family. Homodimer. Mg(2+) serves as cofactor.

It localises to the cytoplasm. In terms of biological role, involved in correct processing of both the 5' and 3' ends of 23S rRNA precursor. Processes 30S rRNA precursor transcript even in absence of ribonuclease 3 (Rnc); Rnc processes 30S rRNA into smaller rRNA precursors. Cleaves more efficiently on assembled 50S ribosomal subunits. Cleavage is strongly stimulated by ribosomal protein L3 (RplC); 20-30% DMSO can replace RplC, suggesting RplC may alter rRNA conformation. This is Mini-ribonuclease 3 (mrnC) from Bacillus subtilis (strain 168).